The sequence spans 486 residues: Vesicular GABA transporter (486 aa).

The Cytoplasmic segment spans residues 1–93 (MASNRFQNLQ…EASEPISALQ (93 aa)). Over residues 29-46 (LNEVPSYQNQPQTGESGS) the composition is skewed to polar residues. Residues 29–85 (LNEVPSYQNQPQTGESGSNPPPHDRLEPIQESVVSEQPQKDDINKQEEAKDDGHGEA) form a disordered region. Positions 66 to 85 (PQKDDINKQEEAKDDGHGEA) are enriched in basic and acidic residues. Residues 94 to 114 (AAWNVTNAIQGMFIVGLPIAV) form a helical membrane-spanning segment. Over 115 to 119 (KVGGW) the chain is Lumenal, vesicle. The helical transmembrane segment at 120–140 (WSIGAMVGVAYVCYWTGVLLI) threads the bilayer. Topologically, residues 141 to 167 (ECLYENGVKKRKTYREIADFYKPGFGK) are cytoplasmic. Residues 168–188 (WVLAAQLTELLSTCIIYLVLA) traverse the membrane as a helical segment. At 189–203 (ADLLQSCFPSVDKAG) the chain is on the lumenal, vesicle side. A helical membrane pass occupies residues 204 to 224 (WMMITSASLLTCSFLDDLQIV). The Cytoplasmic segment spans residues 225–228 (SRLS). The helical transmembrane segment at 229–249 (FFNAISHLIVNLIMVLYCLSF) threads the bilayer. Topologically, residues 250–263 (VSQWSFSTITFSLN) are lumenal, vesicle. The chain crosses the membrane as a helical span at residues 264–284 (INTLPTIVGMVVFGYTSHIFL). Topologically, residues 285–305 (PNLEGNMKNPAQFNVMLKWSH) are cytoplasmic. The chain crosses the membrane as a helical span at residues 306–326 (IAAAVFKVVFGMLGFLTFGEL). Residues 327-341 (TQEEISNSLPNQSFK) are Lumenal, vesicle-facing. Residue N337 is glycosylated (N-linked (GlcNAc...) asparagine). Residues 342–362 (ILVNLILVVKALLSYPLPFYA) form a helical membrane-spanning segment. Residues 363–398 (AVQLLKNNLFLGYPQTPFTSCYSPDKSLREWAVTLR) are Cytoplasmic-facing. The chain crosses the membrane as a helical span at residues 399 to 419 (IILVLFTLFVALSVPYLVELM). Over 420-421 (GL) the chain is Lumenal, vesicle. A helical membrane pass occupies residues 422–442 (VGNITGTMLSFIWPALFHLYI). At 443–457 (KEKTLNNFEKRFDQG) the chain is on the cytoplasmic side. The helical transmembrane segment at 458 to 478 (IIIMGCSVCISGVYFSSMELL) threads the bilayer. The Lumenal, vesicle segment spans residues 479-486 (RAINSADS).

The protein belongs to the amino acid/polyamine transporter 2 family.

It localises to the cytoplasmic vesicle membrane. Involved in the uptake of GABA into the synaptic vesicles. The sequence is that of Vesicular GABA transporter (unc-47) from Caenorhabditis elegans.